We begin with the raw amino-acid sequence, 341 residues long: Methionine import ATP-binding protein MetN (341 aa).

The region spanning 2–237 (IELCGLKKSF…PESLARKMLY (236 aa)) is the ABC transporter domain. 34-41 (GKSGAGKS) is an ATP binding site.

The protein belongs to the ABC transporter superfamily. Methionine importer (TC 3.A.1.24) family. The complex is composed of two ATP-binding proteins (MetN), two transmembrane proteins (MetI) and a solute-binding protein (MetQ).

The protein localises to the cell inner membrane. It carries out the reaction L-methionine(out) + ATP + H2O = L-methionine(in) + ADP + phosphate + H(+). It catalyses the reaction D-methionine(out) + ATP + H2O = D-methionine(in) + ADP + phosphate + H(+). Functionally, part of the ABC transporter complex MetNIQ involved in methionine import. Responsible for energy coupling to the transport system. The protein is Methionine import ATP-binding protein MetN of Legionella pneumophila (strain Lens).